Reading from the N-terminus, the 1755-residue chain is MESQQLSQHSPISHGSACASVTSKEVHTNQDPLDVSASKTEECEKASTKANSQQTTTPASSAVPENPHHASPQPASVPPPQNGPYPQQCMMTQNQANPSGWSFYGHPSMIPYTPYQMSPMYFPPGPQSQFPQYPSSVGTPLSTPSPESGNTFTDSSSADSDMTSTKKYVRPPPMLTSPNDFPNWVKTYIKFLQNSNLGGIIPTVNGKPVRQITDDELTFLYNTFQIFAPSQFLPTWVKDILSVDYTDIMKILSKSIEKMQSDTQEANDIVTLANLQYNGSTPADAFETKVTNIIDRLNNNGIHINNKVACQLIMRGLSGEYKFLRYTRHRHLNMTVAELFLDIHAIYEEQQGSRNSKPNYRRNLSDEKNDSRSYTNTTKPKVIARNPQKTNNSKSKTARAHNVSTSNNSPSTDNDSISKSTTEPIQLNNKHDLHLGQELTESTVNHTNHSDDELPGHLLLDSGASRTLIRSAHHIHSASSNPDINVVDAQKRNIPINAIGDLQFHFQDNTKTSIKVLHTPNIAYDLLSLNELAAVDITACFTKNVLERSDGTVLAPIVKYGDFYWVSKKYLLPSNISVPTINNVHTSESTRKYPYPFIHRMLAHANAPTIRYSLKNNTITYFNESDVDWSSAIDYQCPDCLIGKSTKHRHIKGSRLKYQNSYEPFQYLHTDIFGPVHNLPNSAPSYFISFTDETTKFRWVYPLHDRREDSILDVFTTILAFIKNQFQASVLVIQMDRGSEYTNRTLHKFLEKNGITPCYTTTADSRAHGVAERLNRTLLDDCRTQLQCSGLPNHLWFSAIEFSTIVRNSLASPKSKKSARQHAGLAGLDISTLLPFGQPVIVNDHNPNSKIHPRGIPGYALHPSRNSYGYIIYLPSLKKTVDTTNYVILQGKESRLDQFNYDALTFDEDLNRLTASYHSFIASNEIQESNDLNIESDHDFQSDIELHPEQPRNVLSKAVSPTDSTPPSTHTEDSKRVSKTNIRAPREVDPNISESNILPSKKRSSTPQISNIESTGSGGMHKLNVPLLAPMSQSNTHESSHASKSKDFRHSDSYSENETNHTNVPISSTGGTNNKTVPQISDQETEKRIIHRSPSIDASPPENNSSHNIVPIKTPTTVSEQNTEESIIADLPLPDLPPESPTEFPDPFKELPPINSRQTNSSLGGIGDSNAYTTINSKKRSLEDNETEIKVSRDTWNTKNMRSLEPPRSKKRIHLIAAVKAVKSIKPIRTTLRYDEAITYNKDIKEKEKYIEAYHKEVNQLLKMKTWDTDEYYDRKEIDPKRVINSMFIFNKKRDGTHKARFVARGDIQHPDTYDSGMQSNTVHHYALMTSLSLALDNNYYITQLDISSAYLYADIKEELYIRPPPHLGMNDKLIRLKKSLYGLKQSGANWYETIKSYLIKQCGMEEVRGWSCVFKNSQVTICLFVDDMILFSKDLNANKKIITTLKKQYDTKIINLGESDNEIQYDILGLEIKYQRGKYMKLGMENSLTEKIPKLNVPLNPKGRKLSAPGQPGLYIDQDELEIDEDEYKEKVHEMQKLIGLASYVGYKFRFDLLYYINTLAQHILFPSRQVLDMTYELIQFMWDTRDKQLIWHKNKPTEPDNKLVAISDASYGNQPYYKSQIGNIYLLNGKVIGGKSTKASLTCTSTTEAEIHAISESVPLLNNLSYLIQELNKKPIIKGLLTDSRSTISIIKSTNEEKFRNRFFGTKAMRLRDEVSGNNLYVYYIETKKNIADVMTKPLPIKTFKLLTNKWIH.

Composition is skewed to polar residues over residues 1–23 (MESQ…SVTS), 48–60 (TKAN…TPAS), and 127–152 (QSQF…GNTF). Disordered regions lie at residues 1–93 (MESQ…MMTQ), 126–174 (PQSQ…PPPM), and 352–421 (GSRN…SKST). A compositionally biased stretch (low complexity) spans 153–165 (TDSSSADSDMTST). The RNA-binding stretch occupies residues 299-401 (NNGIHINNKV…NSKSKTARAH (103 aa)). Positions 402–418 (NVSTSNNSPSTDNDSIS) are enriched in low complexity. S416 carries the phosphoserine modification. D461 (for protease activity; shared with dimeric partner) is an active-site residue. The tract at residues 583–640 (NVHTSESTRKYPYPFIHRMLAHANAPTIRYSLKNNTITYFNESDVDWSSAIDYQCPDC) is integrase-type zinc finger-like. Residues 660–835 (NSYEPFQYLH…AGLDISTLLP (176 aa)) enclose the Integrase catalytic domain. Positions 671 and 736 each coordinate Mg(2+). 3 disordered regions span residues 956–1087 (SKAV…ETEK), 1092–1111 (RSPS…NIVP), and 1130–1187 (DLPL…DNET). The span at 960–969 (SPTDSTPPST) shows a compositional bias: low complexity. Over residues 1005-1015 (STPQISNIEST) the composition is skewed to polar residues. Positions 1038-1053 (ESSHASKSKDFRHSDS) are enriched in basic and acidic residues. Polar residues-rich tracts occupy residues 1054 to 1082 (YSEN…QISD) and 1101 to 1111 (PENNSSHNIVP). Positions 1178-1212 (KKRSLEDNETEIKVSRDTWNTKNMRSLEPPRSKKR) match the Bipartite nuclear localization signal motif. Residues 1338–1476 (NNYYITQLDI…DILGLEIKYQ (139 aa)) form the Reverse transcriptase Ty1/copia-type domain. Residues D1346, D1427, D1428, D1610, E1652, and D1685 each contribute to the Mg(2+) site. The RNase H Ty1/copia-type domain maps to 1610–1752 (DASYGNQPYY…IKTFKLLTNK (143 aa)).

In terms of assembly, the capsid protein forms a homotrimer, from which the VLPs are assembled. The protease is a homodimer, whose active site consists of two apposed aspartic acid residues. Post-translationally, initially, virus-like particles (VLPs) are composed of the structural unprocessed proteins Gag and Gag-Pol, and also contain the host initiator methionine tRNA (tRNA(i)-Met) which serves as a primer for minus-strand DNA synthesis, and a dimer of genomic Ty RNA. Processing of the polyproteins occurs within the particle and proceeds by an ordered pathway, called maturation. First, the protease (PR) is released by autocatalytic cleavage of the Gag-Pol polyprotein yielding capsid protein p45 and a Pol-p154 precursor protein. This cleavage is a prerequisite for subsequent processing of Pol-p154 at the remaining sites to release the mature structural and catalytic proteins. Maturation takes place prior to the RT reaction and is required to produce transposition-competent VLPs.

Its subcellular location is the cytoplasm. It is found in the nucleus. The catalysed reaction is DNA(n) + a 2'-deoxyribonucleoside 5'-triphosphate = DNA(n+1) + diphosphate. The enzyme catalyses Endonucleolytic cleavage to 5'-phosphomonoester.. Capsid protein (CA) is the structural component of the virus-like particle (VLP), forming the shell that encapsulates the retrotransposons dimeric RNA genome. The particles are assembled from trimer-clustered units and there are holes in the capsid shells that allow for the diffusion of macromolecules. CA also has nucleocapsid-like chaperone activity, promoting primer tRNA(i)-Met annealing to the multipartite primer-binding site (PBS), dimerization of Ty1 RNA and initiation of reverse transcription. In terms of biological role, the aspartyl protease (PR) mediates the proteolytic cleavages of the Gag and Gag-Pol polyproteins after assembly of the VLP. Functionally, reverse transcriptase/ribonuclease H (RT) is a multifunctional enzyme that catalyzes the conversion of the retro-elements RNA genome into dsDNA within the VLP. The enzyme displays a DNA polymerase activity that can copy either DNA or RNA templates, and a ribonuclease H (RNase H) activity that cleaves the RNA strand of RNA-DNA heteroduplexes during plus-strand synthesis and hydrolyzes RNA primers. The conversion leads to a linear dsDNA copy of the retrotransposon that includes long terminal repeats (LTRs) at both ends. Its function is as follows. Integrase (IN) targets the VLP to the nucleus, where a subparticle preintegration complex (PIC) containing at least integrase and the newly synthesized dsDNA copy of the retrotransposon must transit the nuclear membrane. Once in the nucleus, integrase performs the integration of the dsDNA into the host genome. This Saccharomyces cerevisiae (strain ATCC 204508 / S288c) (Baker's yeast) protein is Transposon Ty1-LR2 Gag-Pol polyprotein (TY1B-LR2).